A 280-amino-acid polypeptide reads, in one-letter code: Acetyl-coenzyme A carboxylase carboxyl transferase subunit beta (280 aa).

The region spanning 25-280 (VMRECPICHA…RLHTKENAYG (256 aa)) is the CoA carboxyltransferase N-terminal domain. The Zn(2+) site is built by C29, C32, C47, and C50. Residues 29–50 (CPICHAKFLSMRLGRDHTCPKC) form a C4-type zinc finger.

Belongs to the AccD/PCCB family. Acetyl-CoA carboxylase is a heterohexamer composed of biotin carboxyl carrier protein (AccB), biotin carboxylase (AccC) and two subunits each of ACCase subunit alpha (AccA) and ACCase subunit beta (AccD). The cofactor is Zn(2+).

The protein localises to the cytoplasm. The enzyme catalyses N(6)-carboxybiotinyl-L-lysyl-[protein] + acetyl-CoA = N(6)-biotinyl-L-lysyl-[protein] + malonyl-CoA. The protein operates within lipid metabolism; malonyl-CoA biosynthesis; malonyl-CoA from acetyl-CoA: step 1/1. In terms of biological role, component of the acetyl coenzyme A carboxylase (ACC) complex. Biotin carboxylase (BC) catalyzes the carboxylation of biotin on its carrier protein (BCCP) and then the CO(2) group is transferred by the transcarboxylase to acetyl-CoA to form malonyl-CoA. The protein is Acetyl-coenzyme A carboxylase carboxyl transferase subunit beta of Lactobacillus helveticus (strain DPC 4571).